A 417-amino-acid polypeptide reads, in one-letter code: Chaperone SurA (417 aa).

Residues 1–12 (MGAALLCSFAHA) form the signal peptide. 2 PpiC domains span residues 163 to 264 (SEEY…KLEE) and 273 to 372 (RDEV…QVLG).

The protein localises to the periplasm. It catalyses the reaction [protein]-peptidylproline (omega=180) = [protein]-peptidylproline (omega=0). Functionally, chaperone involved in the correct folding and assembly of outer membrane proteins. Recognizes specific patterns of aromatic residues and the orientation of their side chains, which are found more frequently in integral outer membrane proteins. May act in both early periplasmic and late outer membrane-associated steps of protein maturation. The protein is Chaperone SurA of Pseudomonas aeruginosa (strain ATCC 15692 / DSM 22644 / CIP 104116 / JCM 14847 / LMG 12228 / 1C / PRS 101 / PAO1).